Reading from the N-terminus, the 318-residue chain is MLVRLVFAGTPESALPALCRLIDSPRHDVIAVLTRPDAASGRRGKPEPSPVAREALDRGIPLLRPARPNSPVFVSELSEWAPECCVVVAYGALLGSPLLAVPPRGWVNLHFSLLPAWRGAAPVQAAIAAGDTITGATTFQIEPSLDSGPVYGVVTETIQPTDTAGDLLERLAVSGATLLSSTLDGIADAILTPRQQPVDGVSFAPKITVEQARVCWDLPAPVVERRIRAVTPNPGAWTLVGKLRVKLGPVRFDSGAVEVPRLLKPLLPGGIHVDHKSVWIGTGSDPVRLSKVQPQGKKFMNAVDWAHGARLDPAARAS.

112–115 (SLLP) is a (6S)-5,6,7,8-tetrahydrofolate binding site.

This sequence belongs to the Fmt family.

The catalysed reaction is L-methionyl-tRNA(fMet) + (6R)-10-formyltetrahydrofolate = N-formyl-L-methionyl-tRNA(fMet) + (6S)-5,6,7,8-tetrahydrofolate + H(+). Its function is as follows. Attaches a formyl group to the free amino group of methionyl-tRNA(fMet). The formyl group appears to play a dual role in the initiator identity of N-formylmethionyl-tRNA by promoting its recognition by IF2 and preventing the misappropriation of this tRNA by the elongation apparatus. The sequence is that of Methionyl-tRNA formyltransferase from Mycobacterium leprae (strain Br4923).